We begin with the raw amino-acid sequence, 344 residues long: MRVLGIETSCDETGVAVYDTEKGLLAHQLYSQVKLHADYGGVVPELASRDHVRKTLPLIKAALKEAGISHQQLDGIAYTMGPGLVGALLVGACIGRSLAFGWNLPAVGVHHMEGHLLAPMLEENQPEFPFVALLVSGGHTQLVQVKGIGDYHLLGESVDDAAGEAFDKTAKLMGLDYPGGPRLAALAEQGNSDRFTFPRPMTDRPGLNFSFSGLKTSAANTLAANDSDEQTLADIARAFEDAVVDTLVIKCRRALKETGYKRLVVAGGVSANKHLRAKLEALLEKQKGQIFYPRTEFCTDNGAMIALAGALRLEAGEREPLAVKTHPRWPMTDLKPMVNISDAV.

Residues His111 and His115 each coordinate Fe cation. Substrate is bound by residues 134-138 (LVSGG), Asp167, Gly180, and Asn272. Position 300 (Asp300) interacts with Fe cation.

This sequence belongs to the KAE1 / TsaD family. Fe(2+) is required as a cofactor.

It is found in the cytoplasm. It catalyses the reaction L-threonylcarbamoyladenylate + adenosine(37) in tRNA = N(6)-L-threonylcarbamoyladenosine(37) in tRNA + AMP + H(+). Functionally, required for the formation of a threonylcarbamoyl group on adenosine at position 37 (t(6)A37) in tRNAs that read codons beginning with adenine. Is involved in the transfer of the threonylcarbamoyl moiety of threonylcarbamoyl-AMP (TC-AMP) to the N6 group of A37, together with TsaE and TsaB. TsaD likely plays a direct catalytic role in this reaction. In Idiomarina loihiensis (strain ATCC BAA-735 / DSM 15497 / L2-TR), this protein is tRNA N6-adenosine threonylcarbamoyltransferase.